Reading from the N-terminus, the 202-residue chain is MSTVDLARVGACVLKHAVTGEAVELRSLWQEQACVVAGLRRFGCMVCRWIARDLSSLKGLLDQHGVRLVGVGPEALGLQEFLDGGYFAGDLYLDESKQFYKELGFKRYSSLSILPAALGKPVRDVAAKAKAAGIQGNLSGDLLQSGGLLVVAKGGDKVLLHFVQKSPGDYAPQESILQALCISAEAACTHQPPQCDEEACSR.

Position 108 is a phosphotyrosine (Tyr108).

It belongs to the peroxiredoxin-like PRXL2 family. Prostamide/prostaglandin F synthase subfamily.

Its subcellular location is the cytoplasm. It is found in the cytosol. The catalysed reaction is prostaglandin H2 + [thioredoxin]-dithiol = prostaglandin F2alpha + [thioredoxin]-disulfide. The enzyme catalyses prostamide F2alpha + [thioredoxin]-disulfide = prostamide H2 + [thioredoxin]-dithiol. Catalyzes the reduction of prostaglandin-ethanolamide H(2) (prostamide H(2)) to prostamide F(2alpha) with NADPH as proton donor. Also able to reduce prostaglandin H(2) to prostaglandin F(2alpha). This chain is Prostamide/prostaglandin F synthase (PRXL2B), found in Sus scrofa (Pig).